The following is a 246-amino-acid chain: MSEIIYGIHAVKALLERDPQRFLEVFILKGRDDRRLQPLIAELEAAGLVIQVASRQWLDSQVEGGVHQGIVARVREGRQYQENDLPALLESVETPFLLVLDGVTDPHNLGACLRSADAAGVHAVIVPRDRSAQLNAIAKKVASGAAENVPLIKVTNLARTLRVLQEHNVWIVGTAGEADHTLYQSKMTGPMALVMGAEGEGMRRLTREHCDELISIPMAGSVSSLNVSVATGVCLFEVVRQRGLKA.

Gly-196, Ile-216, and Leu-225 together coordinate S-adenosyl-L-methionine.

This sequence belongs to the class IV-like SAM-binding methyltransferase superfamily. RNA methyltransferase TrmH family. RlmB subfamily. Homodimer.

The protein resides in the cytoplasm. It catalyses the reaction guanosine(2251) in 23S rRNA + S-adenosyl-L-methionine = 2'-O-methylguanosine(2251) in 23S rRNA + S-adenosyl-L-homocysteine + H(+). In terms of biological role, specifically methylates the ribose of guanosine 2251 in 23S rRNA. The chain is 23S rRNA (guanosine-2'-O-)-methyltransferase RlmB from Yersinia pestis.